The chain runs to 165 residues: Alanine- and arginine-rich domain-containing protein (165 aa).

The interval 136–165 is disordered; the sequence is QQLKKRQDQERASKPQSPQDEEMNPECGNA.

This Rattus norvegicus (Rat) protein is Alanine- and arginine-rich domain-containing protein (Aard).